A 322-amino-acid polypeptide reads, in one-letter code: Cytochrome f (322 aa).

Residues 1 to 36 (MQKNRNTFSWVKEQMTRCISVSMMIYVITRASISNA) form the signal peptide. Heme-binding residues include tyrosine 37, cysteine 57, cysteine 60, and histidine 61. A helical transmembrane segment spans residues 288 to 308 (IQGLLFFLASVILAQIFLVLK).

Belongs to the cytochrome f family. As to quaternary structure, the 4 large subunits of the cytochrome b6-f complex are cytochrome b6, subunit IV (17 kDa polypeptide, petD), cytochrome f and the Rieske protein, while the 4 small subunits are PetG, PetL, PetM and PetN. The complex functions as a dimer. Requires heme as cofactor.

It is found in the plastid. It localises to the chloroplast thylakoid membrane. Functionally, component of the cytochrome b6-f complex, which mediates electron transfer between photosystem II (PSII) and photosystem I (PSI), cyclic electron flow around PSI, and state transitions. In Nymphaea alba (White water-lily), this protein is Cytochrome f.